The following is a 312-amino-acid chain: Olfactory receptor 1D5 (312 aa).

Residues 1–25 (MDGDNQSENSQFLLLGISESPEQQR) lie on the Extracellular side of the membrane. Residue Asn5 is glycosylated (N-linked (GlcNAc...) asparagine). Residues 26–49 (ILFWMFLSMYLVTVLGNVLIILAI) traverse the membrane as a helical segment. Topologically, residues 50 to 57 (SSDSHLHT) are cytoplasmic. Residues 58-79 (PMYFFLANLSFTDLFFVTNTIP) traverse the membrane as a helical segment. Residues 80-100 (KMLVNFQSQNKAISYAGCLTQ) lie on the Extracellular side of the membrane. A disulfide bridge links Cys97 with Cys189. Residues 101-120 (LYFLVSLVTLDNLILAVMAY) traverse the membrane as a helical segment. The Cytoplasmic segment spans residues 121 to 140 (DRYVATCCPLHYVTAMSPGL). A helical membrane pass occupies residues 141 to 158 (CVLLLSLCWGLSVLYGLL). Topologically, residues 159 to 196 (LTFLLTRVTFCGPREIHYLFCDMYILLWLACSNTHIIH) are extracellular. Residues 197–220 (TALIATGCFIFLTPLGFMTTSYVR) traverse the membrane as a helical segment. Over 221-237 (IVRTILQMPSASKKYKT) the chain is Cytoplasmic. The helical transmembrane segment at 238–260 (FSTCASHLGVVSLFYGTLAMVYL) threads the bilayer. Topologically, residues 261–271 (QPLHTYSMKDS) are extracellular. A helical membrane pass occupies residues 272-291 (VATVMYAVLTPMMNPFIYRL). Over 292-312 (RNKDMHGAPGRVLWRPFQRPK) the chain is Cytoplasmic.

Belongs to the G-protein coupled receptor 1 family.

Its subcellular location is the cell membrane. In terms of biological role, odorant receptor. This Homo sapiens (Human) protein is Olfactory receptor 1D5 (OR1D5).